We begin with the raw amino-acid sequence, 119 residues long: Protein phosphatase EYA3 (119 aa).

This sequence belongs to the HAD-like hydrolase superfamily. EYA family. The cofactor is Mg(2+).

The protein localises to the cytoplasm. It localises to the nucleus. The catalysed reaction is O-phospho-L-tyrosyl-[protein] + H2O = L-tyrosyl-[protein] + phosphate. Its function is as follows. Tyrosine phosphatase that specifically dephosphorylates 'Tyr-142' of histone H2AX (H2AXY142ph). 'Tyr-142' phosphorylation of histone H2AX plays a central role in DNA repair and acts as a mark that distinguishes between apoptotic and repair responses to genotoxic stress. Promotes efficient DNA repair by dephosphorylating H2AX, promoting the recruitment of DNA repair complexes containing MDC1. Its function as histone phosphatase probably explains its role in transcription regulation during organogenesis. May be involved in development of the eye. The chain is Protein phosphatase EYA3 (EYA3) from Gallus gallus (Chicken).